The chain runs to 113 residues: UPF0482 protein YnfB (113 aa).

Residues 1-28 form the signal peptide; the sequence is MNYTLSKRLCLTAMLTLAAVVYTTSAFA.

It belongs to the UPF0482 family.

The chain is UPF0482 protein YnfB from Salmonella arizonae (strain ATCC BAA-731 / CDC346-86 / RSK2980).